The following is a 341-amino-acid chain: HTH-type transcriptional repressor PurR (341 aa).

The HTH lacI-type domain occupies 2 to 56 (ATIKDVAKRAGVSTTTVSHVINKTRFVAEETKAAVRAAIKELHYSPSAVARSLKV). The H-T-H motif DNA-binding region spans 4–23 (IKDVAKRAGVSTTTVSHVIN). The DNA-binding element occupies 48–56 (SAVARSLKV). Hypoxanthine-binding residues include Tyr-73, Arg-190, Thr-192, Phe-221, and Asp-275.

In terms of assembly, homodimer.

The protein operates within purine metabolism; purine nucleotide biosynthesis [regulation]. Functionally, is the main repressor of the genes involved in the de novo synthesis of purine nucleotides, regulating purB, purC, purEK, purF, purHD, purL, purMN and guaBA expression. PurR is allosterically activated to bind its cognate DNA by binding the purine corepressors, hypoxanthine or guanine, thereby effecting transcription repression. The protein is HTH-type transcriptional repressor PurR of Pectobacterium atrosepticum (strain SCRI 1043 / ATCC BAA-672) (Erwinia carotovora subsp. atroseptica).